Reading from the N-terminus, the 456-residue chain is FAD-dependent monooxygenase sor5 (456 aa).

Residues 18 to 38 (PLEVAIVGGGLTGLALALGLL) form a helical membrane-spanning segment. N-linked (GlcNAc...) asparagine glycosylation occurs at asparagine 43. Residues glutamate 48 and arginine 119 each contribute to the FAD site. Residue arginine 200 is part of the active site. The FAD site is built by aspartate 331 and alanine 344.

The protein belongs to the paxM FAD-dependent monooxygenase family. Requires FAD as cofactor.

It is found in the membrane. It functions in the pathway secondary metabolite biosynthesis. In terms of biological role, FAD-dependent monooxygenase; part of the SOR gene cluster that mediates the biosynthesis of sorbicillinoids, a diverse group of yellow secondary metabolites that restrict growth of competing pathogenic fungi but not of bacteria. Sorbicillinoids biosynthesis requires the action of two PKSs. The SOR cluster is required for the production of trichodimerol and dihydrotrichotetronin, with sor2 being sufficient for production of trichodimerol, but not dihydrotrichotetronin in the light. Sor1 iteratively combines three acetyl units and the growing chain is modified by the ketoacyl reductase subunit, and optional by the enoyl reductase subunit in the second cycle. The polyketide is then handed over to the PKS sor2, which adds three more acetyl units, and two methyl groups. Sor2 releases an aldehyde, which undergoes spontaneous cyclization resulting in the formation of sorbicillin or 2',3'-dihydrosorbicillin. The monooxygenase sor5 oxidizes sorbicillin and 2',3'-dihydrosorbicillin to 2',3'-dihydrosorbicillinol and sorbicillinol, respectively. The oxidoreductase sor8 further converts sorbicillinol into oxosorbicillinol. Sorbicillinol is the building block for the other sorbicillinoids such as disorbicillinol, bisvertinolon, dihydrobisvertinolone, and dihydrotrichotetronine. The polypeptide is FAD-dependent monooxygenase sor5 (Hypocrea jecorina (strain QM6a) (Trichoderma reesei)).